Reading from the N-terminus, the 25-residue chain is Alanine racemase (25 aa).

The protein belongs to the alanine racemase family. In terms of assembly, homodimer. Requires pyridoxal 5'-phosphate as cofactor.

It catalyses the reaction L-alanine = D-alanine. It functions in the pathway amino-acid biosynthesis; D-alanine biosynthesis; D-alanine from L-alanine: step 1/1. In terms of biological role, catalyzes the interconversion of L-alanine and D-alanine. This chain is Alanine racemase, found in Pseudomonas fluorescens.